Reading from the N-terminus, the 263-residue chain is Ribonuclease HII (263 aa).

Residues 71-262 form the RNase H type-2 domain; it reads QAIAGIDEVG…VKSMCCNSTN (192 aa). The a divalent metal cation site is built by Asp77, Glu78, and Asp172.

It belongs to the RNase HII family. It depends on Mn(2+) as a cofactor. Requires Mg(2+) as cofactor.

It is found in the cytoplasm. It catalyses the reaction Endonucleolytic cleavage to 5'-phosphomonoester.. In terms of biological role, endonuclease that specifically degrades the RNA of RNA-DNA hybrids. The polypeptide is Ribonuclease HII (Streptococcus pyogenes serotype M2 (strain MGAS10270)).